A 212-amino-acid polypeptide reads, in one-letter code: MTSSDQPERGSGDAAVQAAAERAEQTRGRNVPQFDDLPGVGDTANLRLGPELNQACLALLPLVGVWRGDGEAKHPSLEESYWFRQQVSFAHDGRPFLFYESRAWRLDREGGEVVAPDFREVGWLRPQPDDTIEFLLVHSGGLSEMFFGKPRNQTTWEFGTDAVVRTPSAEDATAASRLYGVVEGALAYVEERATSEHELQPRLSAKLDRVVG.

Positions 1–11 (MTSSDQPERGS) are enriched in basic and acidic residues. Residues 1 to 36 (MTSSDQPERGSGDAAVQAAAERAEQTRGRNVPQFDD) are disordered. The GXWXGXG signature appears at 64–70 (GVWRGDG).

Belongs to the nitrobindin family.

The chain is Ferric nitrobindin-like protein from Saccharopolyspora erythraea (strain ATCC 11635 / DSM 40517 / JCM 4748 / NBRC 13426 / NCIMB 8594 / NRRL 2338).